The following is a 385-amino-acid chain: MNNPLLAIQSQYWAVRDYLSPVLRESKFKEHGRITPEEFVAAGDFLTFKFPVWQWEKGESSRARDFLPPDKQYLVTRNVPCLRRATAVDYTNADEDAEKLLSFLDDAEEAPGPDDDWVATHINRSPPHRPTDMDEIPDIPDSPTTAPTREMAGLNVSSGGKLEEDEIPDIDDIPDMDEEGLEDLEDDAAVRIVHPSEAEVNSTAGKNLLQVRTYDCIISYDKHYQTPRFWLFGYDEHKNPLTPAQVFQDVPADHAFKTMTMESFPHSGAQLASVHPCKHASVMKKFIDRMEAAQGPAPTAEPETISSTSGTSGSAGGKEEKEKKKKWGLGSMVRKVTGGSVPKVEKDKDEVVTGVPVDFYLVIFLKFIASIVPTIEVDSTTSTAL.

The flexible region stretch occupies residues 88–208 (VDYTNADEDA…EVNSTAGKNL (121 aa)). Positions 126–169 (PPHRPTDMDEIPDIPDSPTTAPTREMAGLNVSSGGKLEEDEIPD) are disordered. C277 functions as the Glycyl thioester intermediate in the catalytic mechanism. A handle region region spans residues 281 to 359 (SVMKKFIDRM…EVVTGVPVDF (79 aa)). A disordered region spans residues 292 to 329 (AAQGPAPTAEPETISSTSGTSGSAGGKEEKEKKKKWGL). Residues 303–312 (ETISSTSGTS) show a composition bias toward low complexity.

Belongs to the ATG3 family. Monomer. Interacts with ATG8 through an intermediate thioester bond through the C-terminal Gly of ATG8. Also interacts with the 40 amino acid C-terminal region of the E1-like ATG7 enzyme. Also interacts with the ATG12-ATG5 conjugate.

The protein resides in the cytoplasm. Its function is as follows. E2 conjugating enzyme required for the cytoplasm to vacuole transport (Cvt) and autophagy. Required for selective autophagic degradation of the nucleus (nucleophagy) as well as for mitophagy which contributes to regulate mitochondrial quantity and quality by eliminating the mitochondria to a basal level to fulfill cellular energy requirements and preventing excess ROS production. Responsible for the E2-like covalent binding of phosphatidylethanolamine to the C-terminal Gly of ATG8. The ATG12-ATG5 conjugate plays a role of an E3 and promotes the transfer of ATG8 from ATG3 to phosphatidylethanolamine (PE). This step is required for the membrane association of ATG8. The formation of the ATG8-phosphatidylethanolamine conjugate is essential for autophagy and for the cytoplasm to vacuole transport (Cvt). The ATG8-PE conjugate mediates tethering between adjacent membranes and stimulates membrane hemifusion, leading to expansion of the autophagosomal membrane during autophagy. The chain is Autophagy-related protein 3 (ATG3) from Cryptococcus neoformans var. neoformans serotype D (strain B-3501A) (Filobasidiella neoformans).